Reading from the N-terminus, the 183-residue chain is Oligoribonuclease (183 aa).

An Exonuclease domain is found at 9–172; sequence LIWIDLEMTG…DDIRDSISEL (164 aa). Y130 is an active-site residue.

It belongs to the oligoribonuclease family.

It is found in the cytoplasm. In terms of biological role, 3'-to-5' exoribonuclease specific for small oligoribonucleotides. This chain is Oligoribonuclease, found in Acinetobacter baylyi (strain ATCC 33305 / BD413 / ADP1).